The following is a 298-amino-acid chain: Glutamyl-Q tRNA(Asp) synthetase (298 aa).

Residues 9-13 (RFAPS) and Glu-45 contribute to the L-glutamate site. Positions 12 to 22 (PSPSGELHFGS) match the 'HIGH' region motif. Cys-101, Cys-103, Tyr-115, and Cys-119 together coordinate Zn(2+). 2 residues coordinate L-glutamate: Tyr-172 and Arg-190. Positions 228–232 (KLSKQ) match the 'KMSKS' region motif. Lys-231 provides a ligand contact to ATP.

Belongs to the class-I aminoacyl-tRNA synthetase family. GluQ subfamily. Zn(2+) is required as a cofactor.

Its function is as follows. Catalyzes the tRNA-independent activation of glutamate in presence of ATP and the subsequent transfer of glutamate onto a tRNA(Asp). Glutamate is transferred on the 2-amino-5-(4,5-dihydroxy-2-cyclopenten-1-yl) moiety of the queuosine in the wobble position of the QUC anticodon. In Salmonella paratyphi A (strain ATCC 9150 / SARB42), this protein is Glutamyl-Q tRNA(Asp) synthetase.